The primary structure comprises 400 residues: Formate-dependent phosphoribosylglycinamide formyltransferase (400 aa).

N(1)-(5-phospho-beta-D-ribosyl)glycinamide contacts are provided by residues 22-23 and glutamate 82; that span reads EL. ATP contacts are provided by residues arginine 115, lysine 156, 161 to 166, 196 to 199, and glutamate 204; these read SSGKGQ and EGFI. The region spanning 120 to 309 is the ATP-grasp domain; it reads RLAAETLGLP…EFALHARAIL (190 aa). Mg(2+) contacts are provided by glutamate 268 and glutamate 280. N(1)-(5-phospho-beta-D-ribosyl)glycinamide contacts are provided by residues aspartate 287, lysine 361, and 368-369; that span reads RR.

It belongs to the PurK/PurT family. As to quaternary structure, homodimer.

The catalysed reaction is N(1)-(5-phospho-beta-D-ribosyl)glycinamide + formate + ATP = N(2)-formyl-N(1)-(5-phospho-beta-D-ribosyl)glycinamide + ADP + phosphate + H(+). It participates in purine metabolism; IMP biosynthesis via de novo pathway; N(2)-formyl-N(1)-(5-phospho-D-ribosyl)glycinamide from N(1)-(5-phospho-D-ribosyl)glycinamide (formate route): step 1/1. Its function is as follows. Involved in the de novo purine biosynthesis. Catalyzes the transfer of formate to 5-phospho-ribosyl-glycinamide (GAR), producing 5-phospho-ribosyl-N-formylglycinamide (FGAR). Formate is provided by PurU via hydrolysis of 10-formyl-tetrahydrofolate. The chain is Formate-dependent phosphoribosylglycinamide formyltransferase from Xanthomonas oryzae pv. oryzae (strain PXO99A).